The sequence spans 184 residues: Secreted protein B (184 aa).

The N-terminal stretch at 1-19 (MRFILVLVLILGLVSSSFG) is a signal peptide. The N-linked (GlcNAc...) asparagine glycan is linked to Asn-129. The Cell attachment site signature appears at 164-166 (RGD).

This sequence belongs to the Sct family.

The protein localises to the secreted. The protein is Secreted protein B (29C) of Dictyostelium discoideum (Social amoeba).